The following is a 443-amino-acid chain: Probable protein S-acyltransferase 7 (443 aa).

2 helical membrane-spanning segments follow: residues 44-64 (SLAL…IFVA) and 76-96 (GVSI…LLLL). A DHHC domain is found at 149–199 (KYCDTCMLYRPPRCSHCSICNNCVERFDHHCPWVGQCIGMRNYRFFFMFVF). Cys-179 acts as the S-palmitoyl cysteine intermediate in catalysis. Helical transmembrane passes span 193-213 (FFFM…AFCW) and 237-257 (SIVL…LTVF). Residues Ser-327 and Ser-377 each carry the phosphoserine modification. A compositionally biased stretch (basic and acidic residues) spans 382–392 (ATVDEQSDRPS). The segment at 382–443 (ATVDEQSDRP…SGLVTENRPT (62 aa)) is disordered. Phosphoserine is present on Ser-406.

Belongs to the DHHC palmitoyltransferase family.

The protein resides in the cell membrane. It catalyses the reaction L-cysteinyl-[protein] + hexadecanoyl-CoA = S-hexadecanoyl-L-cysteinyl-[protein] + CoA. In terms of biological role, palmitoyl acyltransferase. The protein is Probable protein S-acyltransferase 7 (PAT07) of Arabidopsis thaliana (Mouse-ear cress).